A 56-amino-acid polypeptide reads, in one-letter code: Large ribosomal subunit protein uL30 (56 aa).

The protein belongs to the universal ribosomal protein uL30 family. Part of the 50S ribosomal subunit.

The sequence is that of Large ribosomal subunit protein uL30 from Oleidesulfovibrio alaskensis (strain ATCC BAA-1058 / DSM 17464 / G20) (Desulfovibrio alaskensis).